The sequence spans 403 residues: Casein kinase II subunit alpha-2 (403 aa).

A signal peptide spans 1 to 31 (MHLIFFFSYFLRRYLLLLCAILILRAPLAHS). One can recognise a Protein kinase domain in the interval 104–389 (YEVVRKVGRG…AKEAMAHPYF (286 aa)). Residues 110 to 118 (VGRGKYSEV) and Lys-133 contribute to the ATP site. N-linked (GlcNAc...) asparagine glycosylation is present at Asn-182. Residue Asp-221 is the Proton acceptor of the active site.

It belongs to the protein kinase superfamily. Ser/Thr protein kinase family. CK2 subfamily. As to quaternary structure, heterotetramer of two catalytic alpha subunits and two regulatory beta subunits. In terms of tissue distribution, seems to be present in all plant organs. But seems to be more expressed than CKA1.

Its subcellular location is the nucleus. The protein resides in the nucleolus. The enzyme catalyses L-seryl-[protein] + ATP = O-phospho-L-seryl-[protein] + ADP + H(+). The catalysed reaction is L-threonyl-[protein] + ATP = O-phospho-L-threonyl-[protein] + ADP + H(+). Casein kinases are operationally defined by their preferential utilization of acidic proteins such as caseins as substrates. The alpha chain contains the catalytic site. The tetrameric holoenzyme CK2, composed of two alpha and two beta subunits, phosphorylates the transcription factor PIF1 after an exposure to light, resulting in a proteasome-dependent degradation of PIF1 and promotion of photomorphogenesis. CK2 phosphorylates translation initiation factors. May participate in the regulation of the initiation of translation. Acts as circadian clock component that maintains the correct period length through phosphorylation of CCA1. May act as an ectokinase that phosphorylates several extracellular proteins. This chain is Casein kinase II subunit alpha-2, found in Arabidopsis thaliana (Mouse-ear cress).